A 235-amino-acid polypeptide reads, in one-letter code: Orotidine 5'-phosphate decarboxylase (235 aa).

Residues Asp12, Lys34, 61-70 (DMKLLDIDNT), Thr116, Arg177, Gln186, and Arg207 each bind substrate. The Proton donor role is filled by Lys63.

It belongs to the OMP decarboxylase family. Type 1 subfamily. Homodimer.

It carries out the reaction orotidine 5'-phosphate + H(+) = UMP + CO2. It functions in the pathway pyrimidine metabolism; UMP biosynthesis via de novo pathway; UMP from orotate: step 2/2. Catalyzes the decarboxylation of orotidine 5'-monophosphate (OMP) to uridine 5'-monophosphate (UMP). This is Orotidine 5'-phosphate decarboxylase from Rhizobium leguminosarum bv. trifolii (strain WSM2304).